Reading from the N-terminus, the 238-residue chain is Uridylate kinase (238 aa).

Residue 12–15 (KLSG) coordinates ATP. Gly-54 provides a ligand contact to UMP. Residues Gly-55 and Arg-59 each contribute to the ATP site. UMP contacts are provided by residues Asp-74 and 135-142 (TGNPFFTT). Residues Thr-162, Tyr-168, and Asp-171 each coordinate ATP.

This sequence belongs to the UMP kinase family. As to quaternary structure, homohexamer.

Its subcellular location is the cytoplasm. The catalysed reaction is UMP + ATP = UDP + ADP. Its pathway is pyrimidine metabolism; CTP biosynthesis via de novo pathway; UDP from UMP (UMPK route): step 1/1. Inhibited by UTP. In terms of biological role, catalyzes the reversible phosphorylation of UMP to UDP. This is Uridylate kinase from Nitrosospira multiformis (strain ATCC 25196 / NCIMB 11849 / C 71).